The chain runs to 416 residues: Probable F-box protein At5g47300 (416 aa).

One can recognise an F-box domain in the interval 40 to 86 (TLMLSDLPGDLLEEILCRVPATSLKQLRSTCKQWNNLFNNGRFTRKH).

The sequence is that of Probable F-box protein At5g47300 from Arabidopsis thaliana (Mouse-ear cress).